The primary structure comprises 306 residues: Low-density lipoprotein receptor class A domain-containing protein 4 (306 aa).

Topologically, residues 1–64 (MPEAGFQATN…PPGIFNSELE (64 aa)) are lumenal. The 38-residue stretch at 11–48 (AFTECKFTCTSGKCLYLGSLVCNQQNDCGDNSDEENCL) folds into the LDL-receptor class A domain. 2 disulfide bridges follow: cysteine 19/cysteine 38 and cysteine 32/cysteine 47. A helical membrane pass occupies residues 65–85 (FAQILIIVVVVTVMVVVVVCL). Residues 86–306 (LNHYKVSTRS…GKDRKPGDLV (221 aa)) are Cytoplasmic-facing. The interval 100 to 127 (PNQSQRQEDGLQPEGSLWPSDSSVQRPG) is disordered. The PPxY motif 1 motif lies at 180 to 183 (PPPY). The SMAD interaction motif (SIM) signature appears at 208 to 211 (PPNR). The PPxY motif 2 motif lies at 252-255 (PPTY). The disordered stretch occupies residues 268–306 (FHHQHSNTHRGSRPQFQPNNSEGTIVPIKGKDRKPGDLV). Positions 269-279 (HHQHSNTHRGS) are enriched in basic residues. The span at 281–290 (PQFQPNNSEG) shows a compositional bias: polar residues. Residues 296–306 (KGKDRKPGDLV) are compositionally biased toward basic and acidic residues.

Belongs to the PMEPA1 family. In terms of assembly, interacts with PMEPA1. Interacts (via the SMAD interaction motif) with SMAD2 and SMAD3. Detected in all tissues tested.

It localises to the early endosome membrane. Functionally, functions as a negative regulator of TGF-beta signaling and thereby probably plays a role in cell proliferation, differentiation, apoptosis, motility, extracellular matrix production and immunosuppression. In the canonical TGF-beta pathway, ZFYVE9/SARA recruits the intracellular signal transducer and transcriptional modulators SMAD2 and SMAD3 to the TGF-beta receptor. Phosphorylated by the receptor, SMAD2 and SMAD3 then form a heteromeric complex with SMAD4 that translocates to the nucleus to regulate transcription. Through interaction with SMAD2 and SMAD3, LDLRAD4 may compete with ZFYVE9 and SMAD4 and prevent propagation of the intracellular signal. The polypeptide is Low-density lipoprotein receptor class A domain-containing protein 4 (Ldlrad4) (Mus musculus (Mouse)).